A 320-amino-acid chain; its full sequence is Cytochrome f (320 aa).

Positions methionine 1–alanine 35 are cleaved as a signal peptide. The heme site is built by tyrosine 36, cysteine 56, cysteine 59, and histidine 60. Residues valine 286–lysine 306 form a helical membrane-spanning segment.

The protein belongs to the cytochrome f family. The 4 large subunits of the cytochrome b6-f complex are cytochrome b6, subunit IV (17 kDa polypeptide, petD), cytochrome f and the Rieske protein, while the 4 small subunits are PetG, PetL, PetM and PetN. The complex functions as a dimer. Heme is required as a cofactor.

The protein localises to the plastid. Its subcellular location is the chloroplast thylakoid membrane. Functionally, component of the cytochrome b6-f complex, which mediates electron transfer between photosystem II (PSII) and photosystem I (PSI), cyclic electron flow around PSI, and state transitions. The polypeptide is Cytochrome f (Olimarabidopsis pumila (Dwarf rocket)).